We begin with the raw amino-acid sequence, 150 residues long: Small ribosomal subunit protein eS19S (150 aa).

It belongs to the eukaryotic ribosomal protein eS19 family.

This is Small ribosomal subunit protein eS19S (RPS19S) from Ascaris suum (Pig roundworm).